A 463-amino-acid polypeptide reads, in one-letter code: MVIGSGVFLTRTCYLRLQPPSLVLRRRFCAATTACSVPLNGNKKKKSEKEKVIVISGPTGAGKSRLAMELAKRLNGEIISADSVQVYKGLDVGSAKPSDSDRKVVPHHLIDILHPSQDYSVGQFYDDGRQATKDILNRGRVPIVTGGTGLYLRWFMYGKPDVPKPSPEVIAEAHDMLVGFQTEYNWDAAVELVVNAGDPKASSLPRNDWYRLRRSLEILKSTGSPPSSFRIPYDSFRVNLVAPDADDFLEDGSSADISIQNIETDLDYDFLCFFLSSPRVALYRSIDFRCEDMLSGPNGVLSEARWLLDLGLLPNSNPATRAIGYRQAMEYLLQCRRYEGESSPREFYAFLNKFQTASRNFAKRQMTWFRCEPMYHWLNASKPLDSILQCIYDAYESEAEMVEIPESLRMSKDVRDSREASELKGYRSKNRHFVRREDCSSVLEWIRSEGCKSEASCVESAIA.

G57–S64 is an ATP binding site. A substrate-binding site is contributed by T59–S64. The segment at D82–Q85 is interaction with substrate tRNA.

The protein belongs to the IPP transferase family. It depends on Mg(2+) as a cofactor. As to expression, expressed ubiquitously, with highest expression in proliferating tissues.

The protein resides in the cytoplasm. The enzyme catalyses adenosine(37) in tRNA + dimethylallyl diphosphate = N(6)-dimethylallyladenosine(37) in tRNA + diphosphate. Functionally, catalyzes the transfer of a dimethylallyl group onto the adenine at position 37 in tRNAs that read codons beginning with uridine, leading to the formation of N6-(dimethylallyl)adenosine (i(6)A). Involved in the cis-type cytokinin biosynthesis. The protein is tRNA dimethylallyltransferase 9 (IPT9) of Arabidopsis thaliana (Mouse-ear cress).